A 143-amino-acid polypeptide reads, in one-letter code: Cofilin (143 aa).

The ADF-H domain occupies 5-137 (GVAVSDEALK…AYESVLEKIS (133 aa)).

This sequence belongs to the actin-binding proteins ADF family.

It is found in the cytoplasm. It localises to the cytoskeleton. The protein resides in the nucleus matrix. Controls reversibly actin polymerization and depolymerization in a pH-sensitive manner. It has the ability to bind G- and F-actin in a 1:1 ratio of cofilin to actin. Binding to F-actin is regulated by tropomyosin. It is the major component of intranuclear and cytoplasmic actin rods. Required for accumulation of actin at the cell division site via depolymerizing actin at the cell ends. In association with myosin II has a role in the assembly of the contractile ring via severing actin filaments. Involved in the maintenance of the contractile ring once formed. In association with profilin and capping protein, has a role in the mitotic reorganization of the actin cytoskeleton. The chain is Cofilin (COF1) from Ogataea parapolymorpha (strain ATCC 26012 / BCRC 20466 / JCM 22074 / NRRL Y-7560 / DL-1) (Yeast).